Consider the following 431-residue polypeptide: Adenylosuccinate synthetase (431 aa).

Residues 13-19 and 41-43 each bind GTP; these read GDEGKGK and GHT. Asp14 serves as the catalytic Proton acceptor. Positions 14 and 41 each coordinate Mg(2+). IMP is bound by residues 14–17, 39–42, Thr130, Arg144, Gln225, Thr240, and Arg304; these read DEGK and NAGH. The active-site Proton donor is His42. Substrate is bound at residue 300-306; that stretch reads ATTGRAR. Residues Arg306, 332 to 334, and 414 to 416 each bind GTP; these read KLD and STG.

This sequence belongs to the adenylosuccinate synthetase family. In terms of assembly, homodimer. It depends on Mg(2+) as a cofactor.

It localises to the cytoplasm. The enzyme catalyses IMP + L-aspartate + GTP = N(6)-(1,2-dicarboxyethyl)-AMP + GDP + phosphate + 2 H(+). It participates in purine metabolism; AMP biosynthesis via de novo pathway; AMP from IMP: step 1/2. Plays an important role in the de novo pathway of purine nucleotide biosynthesis. Catalyzes the first committed step in the biosynthesis of AMP from IMP. The sequence is that of Adenylosuccinate synthetase from Chromohalobacter salexigens (strain ATCC BAA-138 / DSM 3043 / CIP 106854 / NCIMB 13768 / 1H11).